Here is a 611-residue protein sequence, read N- to C-terminus: Homeobox protein BEL1 homolog (611 aa).

Disordered stretches follow at residues Q63 to Q87, V101 to S133, L141 to Q160, and S174 to G195. Residues P118 to S133 are compositionally biased toward low complexity. Positions S174–N183 are enriched in low complexity. Residues S197–L213 form an SR/KY domain region. The disordered stretch occupies residues M225–P263. Residues K234–D251 show a composition bias toward basic and acidic residues. The tract at residues E269–I340 is BELL domain. Positions K275–R290 match the Bipartite nuclear localization motif. The segment at residues P391 to M453 is a DNA-binding region (homeobox).

It belongs to the TALE/BELL homeobox family. May form heterodimeric complexes with TALE/KNOX proteins STM, KNAT1/BP, KNAT2 and KNAT5. Interacts with AG-SEP1 and AG-SEP3 dimers. Interacts with KNATM, isoform KNATM-B. Interacts with BZIP30. Expressed in both floral and vegetative tissues.

It is found in the nucleus. Functionally, plays a major role in ovule patterning and in determination of integument identity via its interaction with MADS-box factors. Formation of complex with AG-SEP dimers negatively regulates the carpel identity process and favors the maintenance of ovule identity. BEL1-STM complex maintains the indeterminacy of the inflorescence meristem. Required, with SPL, for cytokinin-induced PIN1 expression in ovules. In Arabidopsis thaliana (Mouse-ear cress), this protein is Homeobox protein BEL1 homolog (BEL1).